A 152-amino-acid chain; its full sequence is Flagellar assembly factor FliW (152 aa).

It belongs to the FliW family. Interacts with translational regulator CsrA and flagellin(s).

The protein resides in the cytoplasm. Its function is as follows. Acts as an anti-CsrA protein, binds CsrA and prevents it from repressing translation of its target genes, one of which is flagellin. Binds to flagellin and participates in the assembly of the flagellum. This Desulfitobacterium hafniense (strain DSM 10664 / DCB-2) protein is Flagellar assembly factor FliW.